The sequence spans 266 residues: Vitamin B12-binding protein (266 aa).

A signal peptide spans 1–22 (MAKSLFRALVALSFLAPLWLNA). A Fe/B12 periplasmic-binding domain is found at 25-266 (RVITLSPANT…QLCNALSQVD (242 aa)). Cyanocob(III)alamin contacts are provided by residues tyrosine 50 and 242–246 (DWFER). Residues cysteine 183 and cysteine 259 are joined by a disulfide bond.

The protein belongs to the BtuF family. The complex is composed of two ATP-binding proteins (BtuD), two transmembrane proteins (BtuC) and a solute-binding protein (BtuF).

The protein resides in the periplasm. Functionally, part of the ABC transporter complex BtuCDF involved in vitamin B12 import. Binds vitamin B12 and delivers it to the periplasmic surface of BtuC. The polypeptide is Vitamin B12-binding protein (Shigella flexneri).